The sequence spans 580 residues: tRNA-guanine(15) transglycosylase (580 aa).

Asp-91 acts as the Nucleophile in catalysis. Residues Asp-126 and Ala-192 each contribute to the substrate site. Zn(2+) contacts are provided by Cys-275, Cys-277, and Cys-280. Residues 504–579 (RMRVVVDEDA…LAVKVRRGVE (76 aa)) enclose the PUA domain.

Belongs to the archaeosine tRNA-ribosyltransferase family. Zn(2+) serves as cofactor.

It carries out the reaction guanosine(15) in tRNA + 7-cyano-7-deazaguanine = 7-cyano-7-carbaguanosine(15) in tRNA + guanine. It participates in tRNA modification; archaeosine-tRNA biosynthesis. Functionally, exchanges the guanine residue with 7-cyano-7-deazaguanine (preQ0) at position 15 in the dihydrouridine loop (D-loop) of archaeal tRNAs. In Thermococcus kodakarensis (strain ATCC BAA-918 / JCM 12380 / KOD1) (Pyrococcus kodakaraensis (strain KOD1)), this protein is tRNA-guanine(15) transglycosylase.